A 182-amino-acid chain; its full sequence is Epididymal-specific lipocalin-10 (182 aa).

Positions 1–19 are cleaved as a signal peptide; that stretch reads MKLEMALSIALALAVVSWT. N-linked (GlcNAc...) asparagine glycans are attached at residues N31 and N144. The cysteines at positions 85 and 176 are disulfide-linked. Position 165 is an N6-acetyllysine (K165).

It belongs to the calycin superfamily. Lipocalin family. Expressed in epididymis.

It is found in the secreted. May play a role in male fertility. May act as a retinoid carrier protein within the epididymis. The polypeptide is Epididymal-specific lipocalin-10 (Lcn10) (Mus musculus (Mouse)).